The primary structure comprises 240 residues: ATP synthase subunit a 1 (240 aa).

Transmembrane regions (helical) follow at residues 23 to 43, 82 to 102, 120 to 140, 186 to 206, and 207 to 227; these read GQVL…SVLA, VPFI…GALF, DINT…YAGF, LVVA…VMLL, and GLFT…AYIH.

The protein belongs to the ATPase A chain family. F-type ATPases have 2 components, CF(1) - the catalytic core - and CF(0) - the membrane proton channel. CF(1) has five subunits: alpha(3), beta(3), gamma(1), delta(1), epsilon(1). CF(0) has four main subunits: a, b, b' and c.

Its subcellular location is the cellular thylakoid membrane. Functionally, key component of the proton channel; it plays a direct role in the translocation of protons across the membrane. This is ATP synthase subunit a 1 from Acaryochloris marina (strain MBIC 11017).